Reading from the N-terminus, the 72-residue chain is NAD(P)H-quinone oxidoreductase subunit O (72 aa).

Belongs to the complex I NdhO subunit family. In terms of assembly, NDH-1 can be composed of about 15 different subunits; different subcomplexes with different compositions have been identified which probably have different functions.

It is found in the cellular thylakoid membrane. It catalyses the reaction a plastoquinone + NADH + (n+1) H(+)(in) = a plastoquinol + NAD(+) + n H(+)(out). The catalysed reaction is a plastoquinone + NADPH + (n+1) H(+)(in) = a plastoquinol + NADP(+) + n H(+)(out). In terms of biological role, NDH-1 shuttles electrons from an unknown electron donor, via FMN and iron-sulfur (Fe-S) centers, to quinones in the respiratory and/or the photosynthetic chain. The immediate electron acceptor for the enzyme in this species is believed to be plastoquinone. Couples the redox reaction to proton translocation, and thus conserves the redox energy in a proton gradient. Cyanobacterial NDH-1 also plays a role in inorganic carbon-concentration. The polypeptide is NAD(P)H-quinone oxidoreductase subunit O (Rippkaea orientalis (strain PCC 8801 / RF-1) (Cyanothece sp. (strain PCC 8801))).